Reading from the N-terminus, the 936-residue chain is MVYSRRGSLGSRLLLLWLLLAYWKAGSGQLHYSIPEEAKHGTFVGRIAQDLGLELAELVPRLFRVASKGRGDLLEVNLQNGILFVNSRIDREELCRRRAECSIHLEVIVDRPLQVFHVEVAVKDINDNPPRFSRQEQRLFILESRMPDSRFPLEGASDLDIGANAQLRYRLNPNEYFDLDVKTNEEETNFLELVLRKSLDREETQEHRLLVIATDGGKPELTGTVQLLINVLDANDNAPEFDKSIYNVRLLENAPSGTLVIKLNASDADEGINKEIVYFFSNLVLDDVKSKFIINSNTGEIKVNGELDYEDYNSYEINIDAMDKSTFPLSGHCKVVVKLLDVNDNTPEMAITTLFLPVKEDAPLSTVIALISVSDRDSGANGQVTCSLMPHVPFKLVSTFKNYYSLVLDSALDRESVSVYELVVTARDGGSPSLWATASVSVEVADVNDNAPAFAQPQYTVFVKENNPPGCHIFTVSARDADAQENALVSYSLVERRVGERPLSSYVSVHAESGKVYALQPLDHEEVELLQFQVSARDAGVPPLGSNVTLQVFVLDENDNAPALLVPRVGGTGGAVSELVPRSVGAGHVVAKVRAVDPDSGYNAWLSYELQPAPGSARIPFRVGLYTGEISTTRSLDETEAPRHRLLVLVKDHGEPPLTATATVLVSLVESGQAPKASSRASAGAVGPEAALVDVNVYLIIAICAVSSLLVLTLLLYTALRCSAQPTEAVCTRGKPTLLCSSAVGSWSYSQQRRQRVCSGEAPPKTDLMAFSPSLPQGPTSTDNPRQPNPDWRYSASLRAGMHSSVHLEEAGILRAGPGGPDQQWPTVSSATPEPEAGEVSPPVGAGVNSNSWTFKYGPGNPKQSGPGELPDKFIIPGSPAIISIRQEPTNSQIDKSDFITFGKKEETKKKKKKKKGNKTQEKKEKGNSTTDNSDQ.

An N-terminal signal peptide occupies residues 1–28; that stretch reads MVYSRRGSLGSRLLLLWLLLAYWKAGSG. Residues 29-696 are Extracellular-facing; sequence QLHYSIPEEA…GPEAALVDVN (668 aa). Cadherin domains follow at residues 33 to 132, 156 to 241, 242 to 349, 350 to 454, 455 to 564, and 580 to 677; these read SIPE…PPRF, ASDL…APEF, DKSI…TPEM, AITT…APAF, AQPQ…APAL, and VPRS…APKA. An N-linked (GlcNAc...) asparagine glycan is attached at Asn264. N-linked (GlcNAc...) asparagine glycosylation occurs at Asn547. Residues 697-717 form a helical membrane-spanning segment; that stretch reads VYLIIAICAVSSLLVLTLLLY. At 718–936 the chain is on the cytoplasmic side; sequence TALRCSAQPT…GNSTTDNSDQ (219 aa). Disordered stretches follow at residues 759–793 and 816–936; these read SGEA…PDWR and AGPG…NSDQ. 5 PXXP repeats span residues 773–776, 785–788, 818–821, 873–876, and 877–890; these read PSLP, PRQP, PGGP, KFII, and PGSP…QEPT. The 5 X 4 AA repeats of P-X-X-P stretch occupies residues 773–890; sequence PSLPQGPTST…AIISIRQEPT (118 aa). Residues 774–786 show a composition bias toward polar residues; sequence SLPQGPTSTDNPR. Residues 895-909 show a composition bias toward basic and acidic residues; the sequence is DKSDFITFGKKEETK.

The protein resides in the cell membrane. Potential calcium-dependent cell-adhesion protein. May be involved in the establishment and maintenance of specific neuronal connections in the brain. This is Protocadherin alpha-5 (PCDHA5) from Homo sapiens (Human).